Consider the following 467-residue polypeptide: SVGFKAGVKEYKLTYYTPEYKTKDTDILAAFRVTPQPGVPPEEAGAAVAAESSTGTWTTVWTDGLTSLDRYKGRCYHIEPVPGEKDQYICYVAYPLDLFEEGSVTNMFTSIVGNVFGFKALRALRLEDLRVPPAYIKTFQGPPHGIQVERDKLNKYGRPLLGCTIKPKLGLSAKNYGRAVYECLRGGLDFTKDDENVNSQPFMRWRDRFLFCAEAIFKVQAETGEIKGHYLNATAGTCEEMIKRAVFARELGAPIVMHDYLTGGFTANTSLAHYCRDNGLLLHIHRAMHAVIDRQKNHGIHFRVLAKALRMSGGDHIHSGTVVGKLEGERDITLGFVDLLRDDFIEKDRSRGIYFTQDWVSLPGVLPVASGGIHVWHMPALTEIFGDDSVLQFGGGTLGHPWGNAPGAVANRVALEACVKARNEGRDLASEGNVIIREAAKWSLELSAACEVWKEIRFNFEAVDTLH.

Lysine 5 bears the N6,N6,N6-trimethyllysine mark. Asparagine 114 and threonine 164 together coordinate substrate. Lysine 166 acts as the Proton acceptor in catalysis. Lysine 168 serves as a coordination point for substrate. Residues lysine 192, aspartate 194, and glutamate 195 each coordinate Mg(2+). Lysine 192 is modified (N6-carboxylysine). Histidine 285 serves as the catalytic Proton acceptor. Residues arginine 286, histidine 318, and serine 370 each coordinate substrate.

The protein belongs to the RuBisCO large chain family. Type I subfamily. As to quaternary structure, heterohexadecamer of 8 large chains and 8 small chains; disulfide-linked. The disulfide link is formed within the large subunit homodimers. Mg(2+) serves as cofactor. Post-translationally, the disulfide bond which can form in the large chain dimeric partners within the hexadecamer appears to be associated with oxidative stress and protein turnover.

It localises to the plastid. The protein localises to the chloroplast. The catalysed reaction is 2 (2R)-3-phosphoglycerate + 2 H(+) = D-ribulose 1,5-bisphosphate + CO2 + H2O. It carries out the reaction D-ribulose 1,5-bisphosphate + O2 = 2-phosphoglycolate + (2R)-3-phosphoglycerate + 2 H(+). In terms of biological role, ruBisCO catalyzes two reactions: the carboxylation of D-ribulose 1,5-bisphosphate, the primary event in carbon dioxide fixation, as well as the oxidative fragmentation of the pentose substrate in the photorespiration process. Both reactions occur simultaneously and in competition at the same active site. The polypeptide is Ribulose bisphosphate carboxylase large chain (Jasminum simplicifolium subsp. suavissimum (Native jasmine)).